The primary structure comprises 186 residues: UPF0301 protein Sfri_2850 (186 aa).

It belongs to the UPF0301 (AlgH) family.

The polypeptide is UPF0301 protein Sfri_2850 (Shewanella frigidimarina (strain NCIMB 400)).